A 662-amino-acid chain; its full sequence is Transketolase (662 aa).

Position 28 (His-28) interacts with substrate. Thiamine diphosphate-binding positions include His-68 and 115–117; that span reads GPL. Residue Asp-156 participates in Mg(2+) binding. 2 residues coordinate thiamine diphosphate: Gly-157 and Asn-186. Mg(2+)-binding residues include Asn-186 and Ile-188. Substrate is bound by residues His-261, Arg-356, and Ser-383. His-261 serves as a coordination point for thiamine diphosphate. Glu-410 serves as the catalytic Proton donor. Thiamine diphosphate is bound at residue Phe-436. Residues His-460, Asp-468, and Arg-519 each coordinate substrate.

The protein belongs to the transketolase family. Homodimer. Mg(2+) serves as cofactor. Ca(2+) is required as a cofactor. It depends on Mn(2+) as a cofactor. The cofactor is Co(2+). Requires thiamine diphosphate as cofactor.

The enzyme catalyses D-sedoheptulose 7-phosphate + D-glyceraldehyde 3-phosphate = aldehydo-D-ribose 5-phosphate + D-xylulose 5-phosphate. Its pathway is carbohydrate biosynthesis; Calvin cycle. It participates in carbohydrate degradation; pentose phosphate pathway. In terms of biological role, catalyzes the transfer of a two-carbon ketol group from a ketose donor to an aldose acceptor, via a covalent intermediate with the cofactor thiamine pyrophosphate. The protein is Transketolase (tkt) of Staphylococcus aureus (strain COL).